Consider the following 103-residue polypeptide: Histone H4 (103 aa).

Residues 1 to 14 show a composition bias toward gly residues; the sequence is MTGRGKGGKGLGKG. Residues 1–20 are disordered; that stretch reads MTGRGKGGKGLGKGGAKRHR. N6-acetyl-N6-methyllysine; alternate is present on residues Lys-6 and Lys-13. The DNA-binding element occupies 17–21; the sequence is KRHRK.

Belongs to the histone H4 family. The nucleosome is a histone octamer containing two molecules each of H2A, H2B, H3 and H4 assembled in one H3-H4 heterotetramer and two H2A-H2B heterodimers. The octamer wraps approximately 147 bp of DNA.

The protein localises to the nucleus. Its subcellular location is the chromosome. In terms of biological role, core component of nucleosome. Nucleosomes wrap and compact DNA into chromatin, limiting DNA accessibility to the cellular machineries which require DNA as a template. Histones thereby play a central role in transcription regulation, DNA repair, DNA replication and chromosomal stability. DNA accessibility is regulated via a complex set of post-translational modifications of histones, also called histone code, and nucleosome remodeling. In Diadromus pulchellus (Parasitic wasp), this protein is Histone H4.